A 530-amino-acid chain; its full sequence is Autoinducer-2 kinase (530 aa).

This sequence belongs to the FGGY kinase family.

It is found in the cytoplasm. It catalyses the reaction (S)-4,5-dihydroxypentane-2,3-dione + ATP = (2S)-2-hydroxy-3,4-dioxopentyl phosphate + ADP + H(+). Catalyzes the phosphorylation of autoinducer-2 (AI-2) to phospho-AI-2, which subsequently inactivates the transcriptional regulator LsrR and leads to the transcription of the lsr operon. Phosphorylates the ring-open form of (S)-4,5-dihydroxypentane-2,3-dione (DPD), which is the precursor to all AI-2 signaling molecules, at the C5 position. This chain is Autoinducer-2 kinase, found in Escherichia coli (strain ATCC 8739 / DSM 1576 / NBRC 3972 / NCIMB 8545 / WDCM 00012 / Crooks).